Consider the following 298-residue polypeptide: N-acetylmuramic acid 6-phosphate etherase (298 aa).

In terms of domain architecture, SIS spans 54 to 217 (TIKAMKQGGR…STTVMIGLGK (164 aa)). The Proton donor role is filled by glutamate 82. The active site involves glutamate 113.

It belongs to the GCKR-like family. MurNAc-6-P etherase subfamily. Homodimer.

The catalysed reaction is N-acetyl-D-muramate 6-phosphate + H2O = N-acetyl-D-glucosamine 6-phosphate + (R)-lactate. It participates in amino-sugar metabolism; N-acetylmuramate degradation. Functionally, specifically catalyzes the cleavage of the D-lactyl ether substituent of MurNAc 6-phosphate, producing GlcNAc 6-phosphate and D-lactate. This Halalkalibacterium halodurans (strain ATCC BAA-125 / DSM 18197 / FERM 7344 / JCM 9153 / C-125) (Bacillus halodurans) protein is N-acetylmuramic acid 6-phosphate etherase.